The sequence spans 291 residues: Phosphatidylserine decarboxylase proenzyme 2 (291 aa).

Residues Asp-112 and Ser-251 each act as charge relay system; for autoendoproteolytic cleavage activity in the active site. Catalysis depends on Ser-251, which acts as the Schiff-base intermediate with substrate; via pyruvic acid; for decarboxylase activity. Ser-251 is modified (pyruvic acid (Ser); by autocatalysis).

It belongs to the phosphatidylserine decarboxylase family. PSD-B subfamily. Prokaryotic type II sub-subfamily. As to quaternary structure, heterodimer of a large membrane-associated beta subunit and a small pyruvoyl-containing alpha subunit. Pyruvate serves as cofactor. Is synthesized initially as an inactive proenzyme. Formation of the active enzyme involves a self-maturation process in which the active site pyruvoyl group is generated from an internal serine residue via an autocatalytic post-translational modification. Two non-identical subunits are generated from the proenzyme in this reaction, and the pyruvate is formed at the N-terminus of the alpha chain, which is derived from the carboxyl end of the proenzyme. The autoendoproteolytic cleavage occurs by a canonical serine protease mechanism, in which the side chain hydroxyl group of the serine supplies its oxygen atom to form the C-terminus of the beta chain, while the remainder of the serine residue undergoes an oxidative deamination to produce ammonia and the pyruvoyl prosthetic group on the alpha chain. During this reaction, the Ser that is part of the protease active site of the proenzyme becomes the pyruvoyl prosthetic group, which constitutes an essential element of the active site of the mature decarboxylase.

It localises to the cell membrane. It carries out the reaction a 1,2-diacyl-sn-glycero-3-phospho-L-serine + H(+) = a 1,2-diacyl-sn-glycero-3-phosphoethanolamine + CO2. It participates in phospholipid metabolism; phosphatidylethanolamine biosynthesis; phosphatidylethanolamine from CDP-diacylglycerol: step 2/2. Its function is as follows. Catalyzes the formation of phosphatidylethanolamine (PtdEtn) from phosphatidylserine (PtdSer). The polypeptide is Phosphatidylserine decarboxylase proenzyme 2 (Clostridium acetobutylicum (strain ATCC 824 / DSM 792 / JCM 1419 / IAM 19013 / LMG 5710 / NBRC 13948 / NRRL B-527 / VKM B-1787 / 2291 / W)).